We begin with the raw amino-acid sequence, 352 residues long: Biotin synthase (352 aa).

The 219-residue stretch at Asn-44–Lys-262 folds into the Radical SAM core domain. Residues Cys-59, Cys-63, and Cys-66 each contribute to the [4Fe-4S] cluster site. The [2Fe-2S] cluster site is built by Cys-103, Cys-134, Cys-194, and Arg-266.

This sequence belongs to the radical SAM superfamily. Biotin synthase family. In terms of assembly, homodimer. [4Fe-4S] cluster is required as a cofactor. Requires [2Fe-2S] cluster as cofactor.

It carries out the reaction (4R,5S)-dethiobiotin + (sulfur carrier)-SH + 2 reduced [2Fe-2S]-[ferredoxin] + 2 S-adenosyl-L-methionine = (sulfur carrier)-H + biotin + 2 5'-deoxyadenosine + 2 L-methionine + 2 oxidized [2Fe-2S]-[ferredoxin]. It functions in the pathway cofactor biosynthesis; biotin biosynthesis; biotin from 7,8-diaminononanoate: step 2/2. In terms of biological role, catalyzes the conversion of dethiobiotin (DTB) to biotin by the insertion of a sulfur atom into dethiobiotin via a radical-based mechanism. This chain is Biotin synthase, found in Pseudomonas aeruginosa (strain UCBPP-PA14).